The sequence spans 1056 residues: Isoleucine--tRNA ligase (1056 aa).

Positions 56 to 66 match the 'HIGH' region motif; it reads PFATGLPHYGH. Positions 603 to 607 match the 'KMSKS' region motif; it reads KMSKS. Lys606 contacts ATP.

Belongs to the class-I aminoacyl-tRNA synthetase family. IleS type 2 subfamily. As to quaternary structure, monomer. Requires Zn(2+) as cofactor.

It localises to the cytoplasm. It catalyses the reaction tRNA(Ile) + L-isoleucine + ATP = L-isoleucyl-tRNA(Ile) + AMP + diphosphate. Functionally, catalyzes the attachment of isoleucine to tRNA(Ile). As IleRS can inadvertently accommodate and process structurally similar amino acids such as valine, to avoid such errors it has two additional distinct tRNA(Ile)-dependent editing activities. One activity is designated as 'pretransfer' editing and involves the hydrolysis of activated Val-AMP. The other activity is designated 'posttransfer' editing and involves deacylation of mischarged Val-tRNA(Ile). The sequence is that of Isoleucine--tRNA ligase from Bdellovibrio bacteriovorus (strain ATCC 15356 / DSM 50701 / NCIMB 9529 / HD100).